A 1037-amino-acid polypeptide reads, in one-letter code: Glycine dehydrogenase (decarboxylating) A, mitochondrial (1037 aa).

The transit peptide at 1-66 (MERARRLANK…LNGFGSQVRT (66 aa)) directs the protein to the mitochondrion. An N6-(pyridoxal phosphate)lysine modification is found at K773.

It belongs to the GcvP family. Homodimer. The glycine cleavage system is composed of four proteins: P, T, L and H. Pyridoxal 5'-phosphate is required as a cofactor. Expressed in leaves, stems and roots.

It is found in the mitochondrion. The enzyme catalyses N(6)-[(R)-lipoyl]-L-lysyl-[glycine-cleavage complex H protein] + glycine + H(+) = N(6)-[(R)-S(8)-aminomethyldihydrolipoyl]-L-lysyl-[glycine-cleavage complex H protein] + CO2. Its function is as follows. The glycine cleavage system catalyzes the degradation of glycine. The P protein binds the alpha-amino group of glycine through its pyridoxal phosphate cofactor; CO(2) is released and the remaining methylamine moiety is then transferred to the lipoamide cofactor of the H protein. This chain is Glycine dehydrogenase (decarboxylating) A, mitochondrial (GDCSPA), found in Flaveria pringlei.